Here is a 323-residue protein sequence, read N- to C-terminus: Phosphatidylglycerol--prolipoprotein diacylglyceryl transferase (323 aa).

3 consecutive transmembrane segments (helical) span residues 15–35, 58–78, and 106–126; these read VIQG…ILIS, FMFS…TLVY, and GMAI…TINT. Residue Arg-156 coordinates a 1,2-diacyl-sn-glycero-3-phospho-(1'-sn-glycerol). A run of 2 helical transmembrane segments spans residues 242 to 262 and 289 to 309; these read GFIF…IEYL and ISMG…WIIV.

This sequence belongs to the Lgt family.

The protein resides in the cell inner membrane. The enzyme catalyses L-cysteinyl-[prolipoprotein] + a 1,2-diacyl-sn-glycero-3-phospho-(1'-sn-glycerol) = an S-1,2-diacyl-sn-glyceryl-L-cysteinyl-[prolipoprotein] + sn-glycerol 1-phosphate + H(+). It participates in protein modification; lipoprotein biosynthesis (diacylglyceryl transfer). Functionally, catalyzes the transfer of the diacylglyceryl group from phosphatidylglycerol to the sulfhydryl group of the N-terminal cysteine of a prolipoprotein, the first step in the formation of mature lipoproteins. The chain is Phosphatidylglycerol--prolipoprotein diacylglyceryl transferase from Borreliella afzelii (strain PKo) (Borrelia afzelii).